Consider the following 86-residue polypeptide: Large ribosomal subunit protein bL31B (86 aa).

The protein belongs to the bacterial ribosomal protein bL31 family. Type B subfamily. Part of the 50S ribosomal subunit.

The chain is Large ribosomal subunit protein bL31B from Salmonella arizonae (strain ATCC BAA-731 / CDC346-86 / RSK2980).